Reading from the N-terminus, the 216-residue chain is Sporamin B (216 aa).

The first 21 residues, methionine 1–serine 21, serve as a signal peptide directing secretion.

Belongs to the protease inhibitor I3 (leguminous Kunitz-type inhibitor) family. In terms of tissue distribution, accumulates specifically in tuberous roots and tubers upon tuberization. Sporamin accounts 60 to 80% of the total soluble protein of the organ.

It localises to the vacuole. Major tuberous root protein. This is Sporamin B (GSPO-B1) from Ipomoea batatas (Sweet potato).